The following is a 461-amino-acid chain: Trigger factor (461 aa).

Residues 166-245 enclose the PPIase FKBP-type domain; the sequence is GDFANIDLTA…VNSVKAEELP (80 aa).

The protein belongs to the FKBP-type PPIase family. Tig subfamily.

It is found in the cytoplasm. It carries out the reaction [protein]-peptidylproline (omega=180) = [protein]-peptidylproline (omega=0). In terms of biological role, involved in protein export. Acts as a chaperone by maintaining the newly synthesized protein in an open conformation. Functions as a peptidyl-prolyl cis-trans isomerase. The chain is Trigger factor from Bifidobacterium animalis subsp. lactis (strain AD011).